Consider the following 398-residue polypeptide: Cytochrome b (398 aa).

Residues 45–65 (LGSIAGIALVIQIITGVILAM) traverse the membrane as a helical segment. Heme b is bound by residues histidine 95 and histidine 109. Helical transmembrane passes span 96–116 (AVGASMFFAAVYLHIARGLYY), 129–149 (IGIIIFLTMMATAFMGYVLPW), 164–184 (FSAIPLIGEFIVTWLWGGFSV), 192–212 (FFSLHYLLPFIIVALVMLHLV), 245–265 (FVGFGVYFIIFAYFIFYEPNY), 277–297 (PLVTPAHIVPEWYFLPFYAIL), 304–324 (LGGVLLMFGSIFVLFLLPWLD), 339–359 (MAFWIFMADCLLLGYLGGQPA), and 366–386 (ISRFAACYYFFHVLVALPLIG). Histidine 196 and histidine 210 together coordinate heme b.

Belongs to the cytochrome b family. The main subunits of complex b-c1 are: cytochrome b, cytochrome c1 and the Rieske protein. The cofactor is heme b.

The protein resides in the cell membrane. Its function is as follows. Component of the ubiquinol-cytochrome c reductase complex (complex III or cytochrome b-c1 complex), which is a respiratory chain that generates an electrochemical potential coupled to ATP synthesis. The sequence is that of Cytochrome b (petB) from Rickettsia conorii (strain ATCC VR-613 / Malish 7).